We begin with the raw amino-acid sequence, 202 residues long: NAD(P)H-quinone oxidoreductase subunit I (202 aa).

4Fe-4S ferredoxin-type domains are found at residues 55-84 (GRIHYEFDKCIACEVCVRVCPINLPVVDWV) and 95-124 (KNYSIDFGACIFCGNCVEYCPTNCLSMTEE). Residues cysteine 64, cysteine 67, cysteine 70, cysteine 74, cysteine 104, cysteine 107, cysteine 110, and cysteine 114 each contribute to the [4Fe-4S] cluster site. Residues 168 to 187 (EYDPHVVPSDRPRAGQRPEE) show a composition bias toward basic and acidic residues. A disordered region spans residues 168–202 (EYDPHVVPSDRPRAGQRPEELVDQYKQAAAANEEN).

This sequence belongs to the complex I 23 kDa subunit family. In terms of assembly, NDH-1 is composed of at least 11 different subunits. [4Fe-4S] cluster is required as a cofactor.

The protein resides in the cellular thylakoid membrane. It carries out the reaction a plastoquinone + NADH + (n+1) H(+)(in) = a plastoquinol + NAD(+) + n H(+)(out). The catalysed reaction is a plastoquinone + NADPH + (n+1) H(+)(in) = a plastoquinol + NADP(+) + n H(+)(out). In terms of biological role, NDH-1 shuttles electrons from an unknown electron donor, via FMN and iron-sulfur (Fe-S) centers, to quinones in the respiratory and/or the photosynthetic chain. The immediate electron acceptor for the enzyme in this species is believed to be plastoquinone. Couples the redox reaction to proton translocation, and thus conserves the redox energy in a proton gradient. This Synechococcus elongatus (strain ATCC 33912 / PCC 7942 / FACHB-805) (Anacystis nidulans R2) protein is NAD(P)H-quinone oxidoreductase subunit I.